A 754-amino-acid chain; its full sequence is 5-methyltetrahydropteroyltriglutamate--homocysteine methyltransferase (754 aa).

Residues arginine 17 to lysine 20 and lysine 117 each bind 5-methyltetrahydropteroyltri-L-glutamate. L-homocysteine-binding positions include isoleucine 431–serine 433 and glutamate 484. L-methionine contacts are provided by residues isoleucine 431–serine 433 and glutamate 484. Residues arginine 515–cysteine 516 and tryptophan 561 contribute to the 5-methyltetrahydropteroyltri-L-glutamate site. An L-homocysteine-binding site is contributed by aspartate 599. Aspartate 599 contributes to the L-methionine binding site. A 5-methyltetrahydropteroyltri-L-glutamate-binding site is contributed by glutamate 605. Zn(2+) is bound by residues histidine 641, cysteine 643, and glutamate 665. Histidine 694 functions as the Proton donor in the catalytic mechanism. Residue cysteine 726 coordinates Zn(2+).

Belongs to the vitamin-B12 independent methionine synthase family. Zn(2+) serves as cofactor.

It catalyses the reaction 5-methyltetrahydropteroyltri-L-glutamate + L-homocysteine = tetrahydropteroyltri-L-glutamate + L-methionine. It functions in the pathway amino-acid biosynthesis; L-methionine biosynthesis via de novo pathway; L-methionine from L-homocysteine (MetE route): step 1/1. Its function is as follows. Catalyzes the transfer of a methyl group from 5-methyltetrahydrofolate to homocysteine resulting in methionine formation. This chain is 5-methyltetrahydropteroyltriglutamate--homocysteine methyltransferase, found in Salmonella paratyphi A (strain ATCC 9150 / SARB42).